We begin with the raw amino-acid sequence, 201 residues long: Inosine triphosphate pyrophosphatase (201 aa).

Residue 13 to 18 (TGNAKK) participates in ITP binding. Mg(2+) is bound at residue Glu-43. ITP contacts are provided by residues Lys-55, 71 to 72 (DT), Lys-88, 148 to 151 (FGWD), Lys-171, and 176 to 177 (HR).

This sequence belongs to the HAM1 NTPase family. In terms of assembly, homodimer. Mg(2+) is required as a cofactor. Requires Mn(2+) as cofactor.

The protein localises to the cytoplasm. The catalysed reaction is ITP + H2O = IMP + diphosphate + H(+). It catalyses the reaction dITP + H2O = dIMP + diphosphate + H(+). The enzyme catalyses XTP + H2O = XMP + diphosphate + H(+). It carries out the reaction N(6)-hydroxy-dATP + H2O = N(6)-hydroxy-dAMP + diphosphate + H(+). Functionally, pyrophosphatase that hydrolyzes the non-canonical purine nucleotides inosine triphosphate (ITP), deoxyinosine triphosphate (dITP) as well as 2'-deoxy-N-6-hydroxylaminopurine triphosphate (dHAPTP) and xanthosine 5'-triphosphate (XTP) to their respective monophosphate derivatives. The enzyme does not distinguish between the deoxy- and ribose forms. Probably excludes non-canonical purines from RNA and DNA precursor pools, thus preventing their incorporation into RNA and DNA and avoiding chromosomal lesions. The sequence is that of Inosine triphosphate pyrophosphatase from Gallus gallus (Chicken).